Consider the following 255-residue polypeptide: 3-alpha-(or 20-beta)-hydroxysteroid dehydrogenase (255 aa).

10–34 (IITGGARGLGAEAARQAVAAGARVV) serves as a coordination point for NAD(+). S139 is a binding site for substrate. Y152 acts as the Proton acceptor in catalysis.

This sequence belongs to the short-chain dehydrogenases/reductases (SDR) family. As to quaternary structure, homotetramer.

The catalysed reaction is androstan-3alpha,17beta-diol + NAD(+) = 17beta-hydroxyandrostanone + NADH + H(+). It participates in lipid metabolism; C21-steroid hormone metabolism. In Streptomyces exfoliatus (Streptomyces hydrogenans), this protein is 3-alpha-(or 20-beta)-hydroxysteroid dehydrogenase.